A 263-amino-acid polypeptide reads, in one-letter code: Complement C1q tumor necrosis factor-related protein 6 (263 aa).

An N-terminal signal peptide occupies residues 1-24 (MRVIMGTASLGSIWAVFLLPLVFG). An N-linked (GlcNAc...) asparagine glycan is attached at asparagine 76. Residues 80–123 (LKGDKGDRGPSGTPGKPGKNGTRGDRGSQGIKGDKGQAGSPGSS) are disordered. The Collagen-like domain maps to 82 to 123 (GDKGDRGPSGTPGKPGKNGTRGDRGSQGIKGDKGQAGSPGSS). In terms of domain architecture, C1q spans 124–263 (CQTHYSAFSV…SGHLIKAEDN (140 aa)).

It is found in the secreted. The protein is Complement C1q tumor necrosis factor-related protein 6 (C1qtnf6) of Rattus norvegicus (Rat).